A 177-amino-acid polypeptide reads, in one-letter code: Large ribosomal subunit protein bL19 (177 aa).

This sequence belongs to the bacterial ribosomal protein bL19 family.

This protein is located at the 30S-50S ribosomal subunit interface and may play a role in the structure and function of the aminoacyl-tRNA binding site. The sequence is that of Large ribosomal subunit protein bL19 from Rhizobium meliloti (strain 1021) (Ensifer meliloti).